The chain runs to 571 residues: External alternative NAD(P)H-ubiquinone oxidoreductase B1, mitochondrial (571 aa).

A mitochondrion-targeting transit peptide spans 1-35 (MTLLSSLGRASRSAPLASKLLLLGTLSGGSIVAYA). FAD is bound at residue 51 to 81 (KVVVLGTGWAGISFLKDLDITSYDVQVVSPQ). NAD(+) is bound at residue 215–251 (LHFVIVGGGPTGVEFAAELHDFIIEDITKIYPSVKEL). In terms of domain architecture, EF-hand spans 372–407 (KILGDIANIFKAADADNSGTLTMEELEGVVDDIIVR). Ca(2+)-binding residues include Asp-385, Asp-387, Ser-389, Thr-391, and Glu-396. The short motif at 562–571 (YIFGRDSSRI) is the Microbody targeting signal element.

It belongs to the NADH dehydrogenase family. Requires FAD as cofactor. Expressed in seedlings, roots, cotyledons, leaves, stems, buds and flowers.

It localises to the mitochondrion inner membrane. The protein localises to the peroxisome. The catalysed reaction is a quinone + NADH + H(+) = a quinol + NAD(+). It carries out the reaction a ubiquinone + NADH + H(+) = a ubiquinol + NAD(+). With respect to regulation, activity is calcium-dependent with a more pronounced effect at higher pH. Its function is as follows. Alternative NADH-ubiquinone oxidoreductase which catalyzes the oxidation of mitochondrial NADH does not translocate protons across the inner mitochondrial membrane. Calcium-dependent NAD(P)H dehydrogenase. Binds calcium ions. In Arabidopsis thaliana (Mouse-ear cress), this protein is External alternative NAD(P)H-ubiquinone oxidoreductase B1, mitochondrial (NDB1).